Reading from the N-terminus, the 374-residue chain is Beta sliding clamp (374 aa).

It belongs to the beta sliding clamp family. In terms of assembly, forms a ring-shaped head-to-tail homodimer around DNA which binds and tethers DNA polymerases and other proteins to the DNA. The DNA replisome complex has a single clamp-loading complex (3 tau and 1 each of delta, delta', psi and chi subunits) which binds 3 Pol III cores (1 core on the leading strand and 2 on the lagging strand) each with a beta sliding clamp dimer. Additional proteins in the replisome are other copies of gamma, psi and chi, Ssb, DNA helicase and RNA primase.

Its subcellular location is the cytoplasm. Confers DNA tethering and processivity to DNA polymerases and other proteins. Acts as a clamp, forming a ring around DNA (a reaction catalyzed by the clamp-loading complex) which diffuses in an ATP-independent manner freely and bidirectionally along dsDNA. Initially characterized for its ability to contact the catalytic subunit of DNA polymerase III (Pol III), a complex, multichain enzyme responsible for most of the replicative synthesis in bacteria; Pol III exhibits 3'-5' exonuclease proofreading activity. The beta chain is required for initiation of replication as well as for processivity of DNA replication. The chain is Beta sliding clamp (dnaN) from Helicobacter pylori (strain ATCC 700392 / 26695) (Campylobacter pylori).